A 192-amino-acid polypeptide reads, in one-letter code: Ion-translocating oxidoreductase complex subunit B (192 aa).

The segment at 1–26 (MNTIWIAVGALTFLGLVFGAILGYAS) is hydrophobic. The 4Fe-4S domain maps to 32-91 (EDDPVVEKIDAILPQSQCGQCGYPGCRPYAEAVGLQGEKINRCAPGGEAVMLKIADLLNV). The [4Fe-4S] cluster site is built by Cys49, Cys52, Cys57, Cys74, Cys117, Cys120, Cys123, Cys127, Cys147, Cys150, Cys153, and Cys157. 2 consecutive 4Fe-4S ferredoxin-type domains span residues 108–137 (MLAVIDENHCIGCTKCIQACPVDAIVGATR) and 138–167 (AMHTVMSDLCTGCNLCVDPCPTHCIELRPV).

This sequence belongs to the 4Fe4S bacterial-type ferredoxin family. RnfB subfamily. In terms of assembly, the complex is composed of six subunits: RsxA, RsxB, RsxC, RsxD, RsxE and RsxG. The cofactor is [4Fe-4S] cluster.

The protein resides in the cell inner membrane. Part of a membrane-bound complex that couples electron transfer with translocation of ions across the membrane. Required to maintain the reduced state of SoxR. This chain is Ion-translocating oxidoreductase complex subunit B, found in Salmonella arizonae (strain ATCC BAA-731 / CDC346-86 / RSK2980).